Here is a 375-residue protein sequence, read N- to C-terminus: Queuine tRNA-ribosyltransferase (375 aa).

Residue D89 is the Proton acceptor of the active site. Residues 89–93 (DSGGF), D143, Q187, and G214 contribute to the substrate site. An RNA binding region spans residues 245 to 251 (GVGKPED). Catalysis depends on D264, which acts as the Nucleophile. Positions 269–273 (TRNAR) are RNA binding; important for wobble base 34 recognition. 4 residues coordinate Zn(2+): C302, C304, C307, and H333.

Belongs to the queuine tRNA-ribosyltransferase family. Homodimer. Within each dimer, one monomer is responsible for RNA recognition and catalysis, while the other monomer binds to the replacement base PreQ1. Requires Zn(2+) as cofactor.

The catalysed reaction is 7-aminomethyl-7-carbaguanine + guanosine(34) in tRNA = 7-aminomethyl-7-carbaguanosine(34) in tRNA + guanine. Its pathway is tRNA modification; tRNA-queuosine biosynthesis. Its function is as follows. Catalyzes the base-exchange of a guanine (G) residue with the queuine precursor 7-aminomethyl-7-deazaguanine (PreQ1) at position 34 (anticodon wobble position) in tRNAs with GU(N) anticodons (tRNA-Asp, -Asn, -His and -Tyr). Catalysis occurs through a double-displacement mechanism. The nucleophile active site attacks the C1' of nucleotide 34 to detach the guanine base from the RNA, forming a covalent enzyme-RNA intermediate. The proton acceptor active site deprotonates the incoming PreQ1, allowing a nucleophilic attack on the C1' of the ribose to form the product. After dissociation, two additional enzymatic reactions on the tRNA convert PreQ1 to queuine (Q), resulting in the hypermodified nucleoside queuosine (7-(((4,5-cis-dihydroxy-2-cyclopenten-1-yl)amino)methyl)-7-deazaguanosine). This Klebsiella pneumoniae subsp. pneumoniae (strain ATCC 700721 / MGH 78578) protein is Queuine tRNA-ribosyltransferase.